A 380-amino-acid chain; its full sequence is MSLPDTPTLALACELISRSSVTPEDAGCLQLIAQRLAPLGFVCERIDIGGVSNLWARRGSARPLLCFAGHTDVVPTGPLDAWQSPPFEPTIRDGHLYGRGAADMKSSLAGFVTAIERFVAAHPDHAGSIALLLTSDEEGVATCGTVKVVEALAARGERLDYCVVGEPTSVKTLGDMIKNGRRGSLSGTLRVKGRQGHVAYPHLARNPIHELAPALAELAAERWDDGNEFFPPTTWQVSNIHAGTGANNVIPGVCDVLFNFRFGSVSTADALKARTHAILDRHGLDYELDWHLSGKPFITGRGQLVAALGNAIRETVGVETELSTTGGTSDGRFIADICAEVVEFGPVNASIHQVNEHIAVDAVEPLSKIYERTLRALLTA.

Residue His-70 coordinates Zn(2+). The active site involves Asp-72. Asp-103 lines the Zn(2+) pocket. Glu-137 acts as the Proton acceptor in catalysis. Positions 138, 166, and 352 each coordinate Zn(2+).

The protein belongs to the peptidase M20A family. DapE subfamily. As to quaternary structure, homodimer. The cofactor is Zn(2+). Co(2+) serves as cofactor.

It catalyses the reaction N-succinyl-(2S,6S)-2,6-diaminopimelate + H2O = (2S,6S)-2,6-diaminopimelate + succinate. The protein operates within amino-acid biosynthesis; L-lysine biosynthesis via DAP pathway; LL-2,6-diaminopimelate from (S)-tetrahydrodipicolinate (succinylase route): step 3/3. In terms of biological role, catalyzes the hydrolysis of N-succinyl-L,L-diaminopimelic acid (SDAP), forming succinate and LL-2,6-diaminopimelate (DAP), an intermediate involved in the bacterial biosynthesis of lysine and meso-diaminopimelic acid, an essential component of bacterial cell walls. The sequence is that of Succinyl-diaminopimelate desuccinylase from Azoarcus sp. (strain BH72).